The chain runs to 1039 residues: Probable calcium-transporting ATPase 9, plasma membrane-type (1039 aa).

The Cytoplasmic portion of the chain corresponds to 1 to 175 (MEKLDRYLQE…FVWDALQDMT (175 aa)). The next 2 helical transmembrane spans lie at 176 to 196 (LIIL…TEGW) and 199 to 219 (GMYD…VTAV). The Cytoplasmic segment spans residues 220-250 (SDYKQSLQFKELDNEKKKIFIHVTRDGRRQK). 2 helical membrane passes run 251-271 (ISIY…DQVP) and 353-373 (VATI…LVLL). Topologically, residues 374–406 (VRFLIDKGMTVGLLKWYSTDALTIVNYFATAVT) are cytoplasmic. The chain crosses the membrane as a helical span at residues 407–427 (IIVVAVPEGLPLAVTLSLAFA). D456 serves as the catalytic 4-aspartylphosphate intermediate. 2 residues coordinate Mg(2+): D758 and D762. A helical membrane pass occupies residues 825–845 (IVALVINFVSACIIGSAPLTA). At 846 to 847 (VQ) the chain is on the cytoplasmic side. 2 helical membrane passes run 848 to 868 (LLWV…TEPP) and 892 to 912 (NIMG…FGGE). Over 913–960 (RLLNIKGADSKSIINTLIFNSFVFCQVFNEINSREMQKINVFRGIISN) the chain is Cytoplasmic. 2 helical membrane-spanning segments follow: residues 961 to 981 (WIFI…IEFL) and 995 to 1015 (WLLS…LKCI). The Cytoplasmic segment spans residues 1016 to 1039 (PVGSGETSATPNGYRPLANGPDDI).

The protein belongs to the cation transport ATPase (P-type) (TC 3.A.3) family. Type IIB subfamily.

The protein resides in the membrane. The enzyme catalyses Ca(2+)(in) + ATP + H2O = Ca(2+)(out) + ADP + phosphate + H(+). Activated by calmodulin. Functionally, this magnesium-dependent enzyme catalyzes the hydrolysis of ATP coupled with the translocation of calcium from the cytosol out of the cell, into the endoplasmic reticulum, or into organelles. In Oryza sativa subsp. japonica (Rice), this protein is Probable calcium-transporting ATPase 9, plasma membrane-type.